A 129-amino-acid chain; its full sequence is MAKANSRVKKKAKQVVTDAVAHVHATFNNTIVTITDRQGNALCWATSGGSGFRGSRKSTPFAAQVAAERAGQMATEYGVKNMDVMVKGPGPGRDSAVRGLNSVGFKITSISDVTPIPHNGCRPPKKRRV.

This sequence belongs to the universal ribosomal protein uS11 family. In terms of assembly, part of the 30S ribosomal subunit. Interacts with proteins S7 and S18. Binds to IF-3.

In terms of biological role, located on the platform of the 30S subunit, it bridges several disparate RNA helices of the 16S rRNA. Forms part of the Shine-Dalgarno cleft in the 70S ribosome. The chain is Small ribosomal subunit protein uS11 from Hydrogenovibrio crunogenus (strain DSM 25203 / XCL-2) (Thiomicrospira crunogena).